We begin with the raw amino-acid sequence, 304 residues long: Putative S-adenosyl-L-methionine-dependent methyltransferase Mjls_1071 (304 aa).

S-adenosyl-L-methionine-binding positions include aspartate 130 and 159–160 (DL).

It belongs to the UPF0677 family.

Exhibits S-adenosyl-L-methionine-dependent methyltransferase activity. This Mycobacterium sp. (strain JLS) protein is Putative S-adenosyl-L-methionine-dependent methyltransferase Mjls_1071.